The primary structure comprises 492 residues: Trk system potassium uptake protein TrkI (492 aa).

Transmembrane regions (helical) follow at residues 20–40, 47–67, 81–101, 143–163, 196–216, 246–266, 282–302, 334–354, 403–423, and 465–485; these read VLAVLWLVLAIFMAIPLLVLI, ALAFGLSIAIVLAAATLSWIV, FVLTTLSWVTISSFASLPLVL, IMQWLGGIGIIVMGIAILPFL, IYCGFTLLAAMAYYLGGMSPL, QLLWMGSLFMLCGALPFVLYI, VQGLLLLLLLVILALTIWRVS, AWGATAYVAFFYLTFVGGCSG, VVAFSFFFFLTVAGLALGLSL, and WLLCVGMLMGRLEILTVLVLL.

Belongs to the TrkH potassium transport family.

Its subcellular location is the cell inner membrane. Functionally, medium-affinity potassium transport system. Probably interacts with Trk system potassium uptake protein TrkA. Main K(+) transporter in osmotically adapted cells. The polypeptide is Trk system potassium uptake protein TrkI (trkI) (Halomonas elongata (strain ATCC 33173 / DSM 2581 / NBRC 15536 / NCIMB 2198 / 1H9)).